A 242-amino-acid polypeptide reads, in one-letter code: Lactate utilization protein A 1 (242 aa).

This sequence belongs to the LutA/YkgE family.

Functionally, is involved in L-lactate degradation and allows cells to grow with lactate as the sole carbon source. The protein is Lactate utilization protein A 1 of Bacillus anthracis (strain CDC 684 / NRRL 3495).